A 167-amino-acid chain; its full sequence is CS6 fimbrial subunit B (167 aa).

A signal peptide spans 1–21 (MLKKIISAIALIAGTSGVVNA).

It is found in the fimbrium. In Escherichia coli, this protein is CS6 fimbrial subunit B (cssB).